The sequence spans 187 residues: Elongation factor P (187 aa).

The protein belongs to the elongation factor P family.

It localises to the cytoplasm. It functions in the pathway protein biosynthesis; polypeptide chain elongation. Its function is as follows. Involved in peptide bond synthesis. Stimulates efficient translation and peptide-bond synthesis on native or reconstituted 70S ribosomes in vitro. Probably functions indirectly by altering the affinity of the ribosome for aminoacyl-tRNA, thus increasing their reactivity as acceptors for peptidyl transferase. The protein is Elongation factor P of Corynebacterium urealyticum (strain ATCC 43042 / DSM 7109).